A 606-amino-acid chain; its full sequence is Melanoma-associated antigen D2 (606 aa).

The interval 1–204 is disordered; it reads MSDTSESGAG…QASGTTGGRR (204 aa). At Ser2 the chain carries N-acetylserine. Ser5 is subject to Phosphoserine. Positions 24–37 are enriched in polar residues; sequence SSMMQTLLTVTQNV. Thr72 carries the phosphothreonine modification. Polar residues predominate over residues 81–93; the sequence is TQASSTTQLTDTQ. Residues 122 to 131 are compositionally biased toward basic and acidic residues; the sequence is ETKKVSHVAD. Positions 142–164 are enriched in low complexity; it reads EAAPSQAPADEPEPESAAAQSQE. Ser157 is subject to Phosphoserine. Residues 171-181 are compositionally biased toward basic residues; that stretch reads KVKAKKARKVK. Ser190, Ser191, Ser194, Ser197, Ser244, and Ser247 each carry phosphoserine. Residues 248–260 are compositionally biased toward basic residues; the sequence is PKARRGKARRRAA. Positions 248-275 are disordered; the sequence is PKARRGKARRRAAKLQSSQEPEAPPPRD. 2 positions are modified to phosphoserine: Ser264 and Ser265. Residues 279–478 form the MAGE domain; sequence LQGRANDLVK…KEWAAQYREA (200 aa). The tract at residues 534 to 563 is disordered; it reads GAEAKAKAQESGSASTGASTSTNNSASASA.

Interacts with GNAS. May interact with DNAJB1. Widely expressed. In the developing and adult kidney, expressed in the thick ascending limb of the loop of Henle and the distal convoluted tubules outside the loop.

Regulates the expression, localization to the plasma membrane and function of the sodium chloride cotransporters SLC12A1 and SLC12A3, two key components of salt reabsorption in the distal renal tubule. In Homo sapiens (Human), this protein is Melanoma-associated antigen D2 (MAGED2).